Reading from the N-terminus, the 207-residue chain is ATP-dependent Clp protease proteolytic subunit (207 aa).

Serine 111 (nucleophile) is an active-site residue. Residue histidine 136 is part of the active site.

The protein belongs to the peptidase S14 family. Fourteen ClpP subunits assemble into 2 heptameric rings which stack back to back to give a disk-like structure with a central cavity, resembling the structure of eukaryotic proteasomes.

The protein resides in the cytoplasm. The catalysed reaction is Hydrolysis of proteins to small peptides in the presence of ATP and magnesium. alpha-casein is the usual test substrate. In the absence of ATP, only oligopeptides shorter than five residues are hydrolyzed (such as succinyl-Leu-Tyr-|-NHMec, and Leu-Tyr-Leu-|-Tyr-Trp, in which cleavage of the -Tyr-|-Leu- and -Tyr-|-Trp bonds also occurs).. Cleaves peptides in various proteins in a process that requires ATP hydrolysis. Has a chymotrypsin-like activity. Plays a major role in the degradation of misfolded proteins. In Photorhabdus laumondii subsp. laumondii (strain DSM 15139 / CIP 105565 / TT01) (Photorhabdus luminescens subsp. laumondii), this protein is ATP-dependent Clp protease proteolytic subunit.